A 662-amino-acid chain; its full sequence is Envelope glycoprotein (662 aa).

The first 34 residues, 1 to 34 (MESPTHPKPSKDKTLSWNLVFLVGILFTIDIGMA), serve as a signal peptide directing secretion. Residues 35-606 (NPSPHQVYNV…FNKSPWFTTL (572 aa)) are Extracellular-facing. 2 N-linked (GlcNAc...) asparagine; by host glycosylation sites follow: Asn43 and Asn58. 2 disulfide bridges follow: Cys115–Cys132 and Cys124–Cys137. The segment at 245–279 (AMGPNLVLPDQKPPSRQSQIESRVTPHHSQGNGGT) is disordered. Residues 258 to 274 (PSRQSQIESRVTPHHSQ) show a composition bias toward polar residues. Asn286, Asn322, and Asn327 each carry an N-linked (GlcNAc...) asparagine; by host glycan. Disulfide bonds link Cys332-Cys335, Cys332-Cys559, and Cys551-Cys558. A CXXC motif is present at residues 332 to 335 (CWLC). Asn351, Asn354, Asn394, Asn410, and Asn430 each carry an N-linked (GlcNAc...) asparagine; by host glycan. The fusion peptide stretch occupies residues 468–488 (ISLTVALMLGGLTVGGIAAGV). Coiled-coil stretches lie at residues 496–545 (IETA…ILFL) and 555–591 (KEECCFYADHTGLVRDNMAKLRERLKQRQQLFDSQQG). The immunosuppression stretch occupies residues 534-550 (LQNRRGLDILFLQEGGL). Residues 551–559 (CAALKEECC) carry the CX6CC motif. A helical membrane pass occupies residues 607 to 627 (ISSIMGPLLILLLILLFGPCI). The S-palmitoyl cysteine; by host moiety is linked to residue Cys626. The Cytoplasmic segment spans residues 628-662 (LNRLVQFVKDRISVVQALILTQQYQQIKQYDPDRP).

In terms of assembly, the mature envelope protein (Env) consists of a trimer of SU-TM heterodimers attached by a labile interchain disulfide bond. Specific enzymatic cleavages in vivo yield mature proteins. Envelope glycoproteins are synthesized as an inactive precursor that is N-glycosylated and processed likely by host cell furin or by a furin-like protease in the Golgi to yield the mature SU and TM proteins. The cleavage site between SU and TM requires the minimal sequence [KR]-X-[KR]-R. The R-peptide is released from the C-terminus of the cytoplasmic tail of the TM protein upon particle formation as a result of proteolytic cleavage by the viral protease. Cleavage of this peptide is required for TM to become fusogenic. In terms of processing, the CXXC motif is highly conserved across a broad range of retroviral envelope proteins. It is thought to participate in the formation of a labile disulfide bond possibly with the CX6CC motif present in the transmembrane protein. Isomerization of the intersubunit disulfide bond to an SU intrachain disulfide bond is thought to occur upon receptor recognition in order to allow membrane fusion. Post-translationally, the transmembrane protein is palmitoylated. The R-peptide is palmitoylated.

The protein localises to the virion membrane. It localises to the host cell membrane. In terms of biological role, the surface protein (SU) attaches the virus to the host cell by binding to its receptor. This interaction triggers the refolding of the transmembrane protein (TM) and is thought to activate its fusogenic potential by unmasking its fusion peptide. Fusion occurs at the host cell plasma membrane. Functionally, the transmembrane protein (TM) acts as a class I viral fusion protein. Under the current model, the protein has at least 3 conformational states: pre-fusion native state, pre-hairpin intermediate state, and post-fusion hairpin state. During viral and target cell membrane fusion, the coiled coil regions (heptad repeats) assume a trimer-of-hairpins structure, positioning the fusion peptide in close proximity to the C-terminal region of the ectodomain. The formation of this structure appears to drive apposition and subsequent fusion of viral and target cell membranes. Membranes fusion leads to delivery of the nucleocapsid into the cytoplasm. In Felidae (cat family), this protein is Envelope glycoprotein (env).